We begin with the raw amino-acid sequence, 347 residues long: 4-hydroxy-2-oxovalerate aldolase 2 (347 aa).

The Pyruvate carboxyltransferase domain occupies 7–259 (VRITDTSLRD…KTGIDFFDIA (253 aa)). Residue 15 to 16 (RD) coordinates substrate. Asp-16 lines the Mn(2+) pocket. His-19 functions as the Proton acceptor in the catalytic mechanism. Substrate contacts are provided by Ser-169 and His-198. Mn(2+) contacts are provided by His-198 and His-200. Tyr-289 lines the substrate pocket.

It belongs to the 4-hydroxy-2-oxovalerate aldolase family.

It catalyses the reaction (S)-4-hydroxy-2-oxopentanoate = acetaldehyde + pyruvate. This chain is 4-hydroxy-2-oxovalerate aldolase 2, found in Mycobacterium marinum (strain ATCC BAA-535 / M).